A 404-amino-acid polypeptide reads, in one-letter code: F-box protein At3g57590 (404 aa).

The F-box domain maps to 1-47; sequence MEPIPNDLILEIFSRLPAKSVIGFRTLSKHWASILRSPVFTELFLTR.

This is F-box protein At3g57590 from Arabidopsis thaliana (Mouse-ear cress).